A 115-amino-acid polypeptide reads, in one-letter code: Large ribosomal subunit protein bL19 (115 aa).

It belongs to the bacterial ribosomal protein bL19 family. In terms of assembly, part of the 50S ribosomal subunit.

This protein is located at the 30S-50S ribosomal subunit interface and may play a role in the structure and function of the aminoacyl-tRNA binding site. The sequence is that of Large ribosomal subunit protein bL19 (rplS) from Bacillus subtilis (strain 168).